Consider the following 199-residue polypeptide: MAISKNLPILKNHFRKHWQERVKVHFDQAGKKVSRRNARATRAAKIAPRPLDLLRPVVRAPTVKYNRKVRAGRGFTLAEVKAAGLTAAYARTIGIAVDHRRQNRNQEIFDANVQRLKEYQSKIIVFPRNGKAPEAEQVLSAAATFPIAQPATDVEARAVQDNGESAFRTLRLARSEKKFRGIREKRAREKAEAEAEKKK.

A phosphothreonine mark is found at Thr144 and Thr152.

It belongs to the eukaryotic ribosomal protein eL13 family. As to quaternary structure, component of the large ribosomal subunit (LSU). Mature yeast ribosomes consist of a small (40S) and a large (60S) subunit. The 40S small subunit contains 1 molecule of ribosomal RNA (18S rRNA) and 33 different proteins (encoded by 57 genes). The large 60S subunit contains 3 rRNA molecules (25S, 5.8S and 5S rRNA) and 46 different proteins (encoded by 81 genes).

Its subcellular location is the cytoplasm. In terms of biological role, component of the ribosome, a large ribonucleoprotein complex responsible for the synthesis of proteins in the cell. The small ribosomal subunit (SSU) binds messenger RNAs (mRNAs) and translates the encoded message by selecting cognate aminoacyl-transfer RNA (tRNA) molecules. The large subunit (LSU) contains the ribosomal catalytic site termed the peptidyl transferase center (PTC), which catalyzes the formation of peptide bonds, thereby polymerizing the amino acids delivered by tRNAs into a polypeptide chain. The nascent polypeptides leave the ribosome through a tunnel in the LSU and interact with protein factors that function in enzymatic processing, targeting, and the membrane insertion of nascent chains at the exit of the ribosomal tunnel. The sequence is that of Large ribosomal subunit protein eL13A from Saccharomyces cerevisiae (strain ATCC 204508 / S288c) (Baker's yeast).